The following is a 209-amino-acid chain: Ion-translocating oxidoreductase complex subunit G (209 aa).

The helical transmembrane segment at 9–29 (GLVLAIFACASTGLVAVTHYL) threads the bilayer. T175 bears the FMN phosphoryl threonine mark.

This sequence belongs to the RnfG family. In terms of assembly, the complex is composed of six subunits: RnfA, RnfB, RnfC, RnfD, RnfE and RnfG. Requires FMN as cofactor.

It localises to the cell inner membrane. In terms of biological role, part of a membrane-bound complex that couples electron transfer with translocation of ions across the membrane. In Vibrio atlanticus (strain LGP32) (Vibrio splendidus (strain Mel32)), this protein is Ion-translocating oxidoreductase complex subunit G.